The sequence spans 372 residues: THAP domain-containing protein 5 (372 aa).

The THAP-type zinc-finger motif lies at Met-1 to Phe-85. A coiled-coil region spans residues Thr-306 to Asn-362.

It is found in the nucleus. The sequence is that of THAP domain-containing protein 5 (thap5) from Xenopus laevis (African clawed frog).